Consider the following 644-residue polypeptide: MEQVTLTSDGTSSVFAENTVREVCNINYWGMRYYNVDEKGDIFVCPDPDKPQNRVSLAALAEKVQREQGAHLPTLFCFPQIIQHRLRSINQAFKRAREDFGYEGNYFLVYPIKVNQHRRIVESLISSGQPLGLEAGSKAELMAVLAHAGITQTVIVCNGYKDREYVRFALMGEKLGHKVYLVIEKLSEIQLVLEEAAKLNVKPRLGVRARLASQGSGKWQSSGGEKSKFGLSASQVLSLVQMLKEHECLDCLQLLHFHLGSQLGNIRDVATGVRESARFYVELHKLGVNIQCFDVGGGLGVDYEGNRTQSDCSVNYGLNEYADTVVWGIGQACREHGLPHPTIITESGRGVTAHHAVLVSNVIGVERYKFETLAAPAKDAPSVLHSMWETWVDIQSSREKRSLRSWIHESQFDLSDVHNQYNVGLLNLEQRAWAEQLYLNICHEVGQLFNEKHRSHRTIIDELQERFADKLYVNFSLFQSLPDAWGIDQLFPVCPISNLNQPVSRRAVLLDITCDSDGTIDHYIDGDGITTTMPMPHYEEDNPPLLGFFMVGAYQEILGNMHNLFGDTSTVDVLVHEQDKAYIVDYDEGNTVADMLEYVYLDPKKLLDRYREQIEHSNLPASEAIQFLNELEVGLNGYTYLEDE.

Position 113 is an N6-(pyridoxal phosphate)lysine (lysine 113). Phenylalanine 293 to tyrosine 303 provides a ligand contact to substrate.

Belongs to the Orn/Lys/Arg decarboxylase class-II family. SpeA subfamily. The cofactor is Mg(2+). Requires pyridoxal 5'-phosphate as cofactor.

It carries out the reaction L-arginine + H(+) = agmatine + CO2. Catalyzes the biosynthesis of agmatine from arginine. In Pasteurella multocida (strain Pm70), this protein is Biosynthetic arginine decarboxylase.